The following is a 310-amino-acid chain: HPr kinase/phosphorylase (310 aa).

Residues His138 and Lys159 contribute to the active site. 153 to 160 (GASGIGKS) contacts ATP. Residue Ser160 coordinates Mg(2+). The active-site Proton acceptor; for phosphorylation activity. Proton donor; for dephosphorylation activity is Asp177. The interval 201–210 (IEIRGVGIID) is important for the catalytic mechanism of both phosphorylation and dephosphorylation. Glu202 serves as a coordination point for Mg(2+). Residue Arg243 is part of the active site. The important for the catalytic mechanism of dephosphorylation stretch occupies residues 264–269 (PVKTGR).

The protein belongs to the HPrK/P family. As to quaternary structure, homohexamer. Requires Mg(2+) as cofactor.

The catalysed reaction is [HPr protein]-L-serine + ATP = [HPr protein]-O-phospho-L-serine + ADP + H(+). It carries out the reaction [HPr protein]-O-phospho-L-serine + phosphate + H(+) = [HPr protein]-L-serine + diphosphate. Its function is as follows. Catalyzes the ATP- as well as the pyrophosphate-dependent phosphorylation of a specific serine residue in HPr, a phosphocarrier protein of the phosphoenolpyruvate-dependent sugar phosphotransferase system (PTS). HprK/P also catalyzes the pyrophosphate-producing, inorganic phosphate-dependent dephosphorylation (phosphorolysis) of seryl-phosphorylated HPr (P-Ser-HPr). The two antagonistic activities of HprK/P are regulated by several intracellular metabolites, which change their concentration in response to the absence or presence of rapidly metabolisable carbon sources (glucose, fructose, etc.) in the growth medium. Therefore, by controlling the phosphorylation state of HPr, HPrK/P is a sensor enzyme that plays a major role in the regulation of carbon metabolism and sugar transport: it mediates carbon catabolite repression (CCR), and regulates PTS-catalyzed carbohydrate uptake and inducer exclusion. This is HPr kinase/phosphorylase from Lactococcus lactis subsp. cremoris (strain MG1363).